Consider the following 234-residue polypeptide: S-adenosylmethionine synthase 1 (234 aa).

ATP-binding positions include 10–12, 78–81, D89, 95–96, A112, K116, and K120; these read DGK, SGRF, and RK. Position 89 (D89) interacts with L-methionine. Residue K120 participates in L-methionine binding.

It belongs to the AdoMet synthase family. Homotetramer. Mn(2+) serves as cofactor. Requires Mg(2+) as cofactor. It depends on Co(2+) as a cofactor. The cofactor is K(+). As to expression, mainly in floral buds and roots.

The protein localises to the cytoplasm. It carries out the reaction L-methionine + ATP + H2O = S-adenosyl-L-methionine + phosphate + diphosphate. It participates in amino-acid biosynthesis; S-adenosyl-L-methionine biosynthesis; S-adenosyl-L-methionine from L-methionine: step 1/1. Its function is as follows. Catalyzes the formation of S-adenosylmethionine from methionine and ATP. The reaction comprises two steps that are both catalyzed by the same enzyme: formation of S-adenosylmethionine (AdoMet) and triphosphate, and subsequent hydrolysis of the triphosphate. The sequence is that of S-adenosylmethionine synthase 1 (SMS-1) from Petroselinum crispum (Parsley).